A 219-amino-acid polypeptide reads, in one-letter code: MTNILIVEDEQNLARFLELELTHDNYSVDIEYEGQAGLDKALSNNYDLIILDLMLPNINGLEICRRVRQEQSTPIIIITAKSDTYDKVTGLDYGADDYIVKPFEIEELFARIRAVLRRQPQKDIIDINGIKIDVDAFNVTINGEQLDFTKTEYDLLYLLATNRNRVLQREQILDHVWGYDSEVETNVVDVYIRYLRNKLKPYGKDKTIETVRGVGYVIR.

The 114-residue stretch at 3–116 (NILIVEDEQN…ELFARIRAVL (114 aa)) folds into the Response regulatory domain. Aspartate 52 is subject to 4-aspartylphosphate. Positions 122–219 (KDIIDINGIK…TVRGVGYVIR (98 aa)) form a DNA-binding region, ompR/PhoB-type.

Post-translationally, phosphorylated by ArlS.

It localises to the cytoplasm. In terms of biological role, member of the two-component regulatory system ArlS/ArlR. In Staphylococcus haemolyticus (strain JCSC1435), this protein is Response regulator ArlR (arlR).